Consider the following 427-residue polypeptide: 3-phosphoshikimate 1-carboxyvinyltransferase (427 aa).

Residues Lys23, Ser24, and Arg28 each coordinate 3-phosphoshikimate. Residue Lys23 coordinates phosphoenolpyruvate. Phosphoenolpyruvate contacts are provided by Gly97 and Arg125. Residues Ser170, Ser171, Gln172, Ser198, Asp314, Asn337, and Lys341 each contribute to the 3-phosphoshikimate site. Residue Gln172 coordinates phosphoenolpyruvate. Asp314 acts as the Proton acceptor in catalysis. Positions 345, 387, and 412 each coordinate phosphoenolpyruvate.

The protein belongs to the EPSP synthase family. In terms of assembly, monomer.

It localises to the cytoplasm. It carries out the reaction 3-phosphoshikimate + phosphoenolpyruvate = 5-O-(1-carboxyvinyl)-3-phosphoshikimate + phosphate. The protein operates within metabolic intermediate biosynthesis; chorismate biosynthesis; chorismate from D-erythrose 4-phosphate and phosphoenolpyruvate: step 6/7. In terms of biological role, catalyzes the transfer of the enolpyruvyl moiety of phosphoenolpyruvate (PEP) to the 5-hydroxyl of shikimate-3-phosphate (S3P) to produce enolpyruvyl shikimate-3-phosphate and inorganic phosphate. The protein is 3-phosphoshikimate 1-carboxyvinyltransferase of Buchnera aphidicola subsp. Acyrthosiphon pisum (strain Tuc7).